A 225-amino-acid chain; its full sequence is NAD(P)H-quinone oxidoreductase subunit K, chloroplastic (225 aa).

[4Fe-4S] cluster is bound by residues Cys-43, Cys-44, Cys-108, and Cys-139.

The protein belongs to the complex I 20 kDa subunit family. In terms of assembly, NDH is composed of at least 16 different subunits, 5 of which are encoded in the nucleus. The cofactor is [4Fe-4S] cluster.

It localises to the plastid. The protein localises to the chloroplast thylakoid membrane. The enzyme catalyses a plastoquinone + NADH + (n+1) H(+)(in) = a plastoquinol + NAD(+) + n H(+)(out). It carries out the reaction a plastoquinone + NADPH + (n+1) H(+)(in) = a plastoquinol + NADP(+) + n H(+)(out). Functionally, NDH shuttles electrons from NAD(P)H:plastoquinone, via FMN and iron-sulfur (Fe-S) centers, to quinones in the photosynthetic chain and possibly in a chloroplast respiratory chain. The immediate electron acceptor for the enzyme in this species is believed to be plastoquinone. Couples the redox reaction to proton translocation, and thus conserves the redox energy in a proton gradient. The polypeptide is NAD(P)H-quinone oxidoreductase subunit K, chloroplastic (Hordeum vulgare (Barley)).